Consider the following 490-residue polypeptide: B3 domain-containing protein LOC_Os12g40080 (490 aa).

A DNA-binding region (TF-B3 1) is located at residues 24–117 (GKSFIKVMIT…HFKVWIYDPS (94 aa)). The tract at residues 161–191 (SGHSKETSEINPANSPSWKPTERVPSSEELD) is disordered. A compositionally biased stretch (polar residues) spans 169–178 (EINPANSPSW). DNA-binding regions (TF-B3) lie at residues 236–331 (FYIT…FHPL) and 389–487 (VAVM…IRKS).

It is found in the nucleus. In Oryza sativa subsp. japonica (Rice), this protein is B3 domain-containing protein LOC_Os12g40080.